Reading from the N-terminus, the 154-residue chain is MAKQEQNIVYLYCDGACRGNPGPGGWGVLLRYNQHERQLHGGVANTTNNQMELTAAIEGLKSLKKPCQVVVTTDSQYLRRGITEWLPVWKRRGWRTSNKKPVKNQPLWETLEREVERHTIVWHWVKGHSGHAENEIADELANRGIDEVLKRGAR.

Positions 5-146 (EQNIVYLYCD…ADELANRGID (142 aa)) constitute an RNase H type-1 domain. 4 residues coordinate Mg(2+): D14, E52, D74, and D138.

Belongs to the RNase H family. As to quaternary structure, monomer. Mg(2+) is required as a cofactor.

The protein localises to the cytoplasm. The catalysed reaction is Endonucleolytic cleavage to 5'-phosphomonoester.. Its function is as follows. Endonuclease that specifically degrades the RNA of RNA-DNA hybrids. This chain is Ribonuclease H, found in Coxiella burnetii (strain CbuK_Q154) (Coxiella burnetii (strain Q154)).